Consider the following 431-residue polypeptide: Saglin (431 aa).

Positions 1–39 (MSVRGYSGVQVISSRKHRSMSRLPTVLLLLASAAVLAAG) are cleaved as a signal peptide. The N-linked (GlcNAc...) asparagine glycan is linked to asparagine 95. Residues 120–169 (LDDAQRQMEQEHRQYAATLEEQLHAAQQETQQEQEMKKALQKQLDALTDS) adopt a coiled-coil conformation.

In terms of assembly, homodimer; disulfide-linked. As to quaternary structure, (Microbial infection) Interacts with Plasmodium berghei TRAP (via integrin-like A-domain); the interaction probably promotes sporozoite invasion of salivary gland. As to expression, female saliva (at protein level). Female salivary gland (at protein level).

It is found in the secreted. (Microbial infection) Facilitates invasion of mosquito salivary glands by Plasmodium yoelii sporozoites. Its function is as follows. (Microbial infection) Facilitates invasion of mosquito salivary glands by Plasmodium falciparum sporozoites. In terms of biological role, (Microbial infection) Probably facilitates invasion of mosquito salivary glands by Plasmodium berghei sporozoites. This is Saglin from Anopheles gambiae (African malaria mosquito).